Reading from the N-terminus, the 201-residue chain is Glycerol-3-phosphate acyltransferase (201 aa).

4 consecutive transmembrane segments (helical) span residues 4–24, 84–104, 116–136, and 157–177; these read IASLVLAYLLGSVPFAVLVSL, EIAMVGLAVFIGHLWPVFLAF, VLLAVNPWLALIAAAVWLAVA, and AWFIEPGVYAGLTIVIALLLV.

This sequence belongs to the PlsY family. As to quaternary structure, probably interacts with PlsX.

It is found in the cell inner membrane. It catalyses the reaction an acyl phosphate + sn-glycerol 3-phosphate = a 1-acyl-sn-glycero-3-phosphate + phosphate. It participates in lipid metabolism; phospholipid metabolism. In terms of biological role, catalyzes the transfer of an acyl group from acyl-phosphate (acyl-PO(4)) to glycerol-3-phosphate (G3P) to form lysophosphatidic acid (LPA). This enzyme utilizes acyl-phosphate as fatty acyl donor, but not acyl-CoA or acyl-ACP. In Laribacter hongkongensis (strain HLHK9), this protein is Glycerol-3-phosphate acyltransferase.